We begin with the raw amino-acid sequence, 624 residues long: Prickle planar cell polarity protein 3 (624 aa).

Basic residues predominate over residues 1-12 (MFARGSRRRRSG). The interval 1–26 (MFARGSRRRRSGRAPPEAEDPARGQP) is disordered. In terms of domain architecture, PET spans 74-182 (SDFQRHSISD…TVRIFPVTIT (109 aa)). 3 consecutive LIM zinc-binding domains span residues 184–249 (AICE…CLRP), 250–309 (RCQA…RHAE), and 310–373 (YCDG…SETT). A disordered region spans residues 371 to 617 (ETTAPGPGRR…SHPVMPRQTR (247 aa)). Residues 383–409 (SAGTVTTPLTTSTASFSATEGTSETAS) are compositionally biased toward low complexity. Residues 447–458 (PEPPTESPGHPA) are compositionally biased toward pro residues. A phosphoserine mark is found at serine 475 and serine 491. Positions 509-541 (SCHHHHHHRRRRQRHRRRGSHHHHHHPGRHGHH) are enriched in basic residues. A compositionally biased stretch (low complexity) spans 545 to 564 (LGSGSDSGSCSSSPSSPSSE). The span at 587–601 (RTTQDTSTETFNSPA) shows a compositional bias: polar residues.

The protein belongs to the prickle / espinas / testin family. Interacts with VANGL2 via its C-terminus. The VANGL2-dependent membrane recruitment of PRICKLE3 is a prerequisite for its polarization. Interacts with WTIP. WTIP is involved in the recruitment of PRICKLE3 to the basal body. Interacts with MT-ATP8, a component of the mitochondrial complex V. Widely expressed.

The protein resides in the cytoplasm. Its subcellular location is the cell membrane. It localises to the mitochondrion. Functionally, involved in the planar cell polarity (PCP) pathway that is essential for the polarization of epithelial cells during morphogenetic processes, including gastrulation and neurulation. PCP is maintained by two molecular modules, the global and the core modules, PRICKLE3 being part of the core module. Distinct complexes of the core module segregate to opposite sides of the cell, where they interact with the opposite complex in the neighboring cell at or near the adherents junctions. Involved in the organization of the basal body. Involved in cilia growth and positioning. Required for proper assembly, stability, and function of mitochondrial membrane ATP synthase (mitochondrial complex V). The chain is Prickle planar cell polarity protein 3 from Mus musculus (Mouse).